Consider the following 422-residue polypeptide: Cystine lyase CORI3 (422 aa).

Belongs to the class-I pyridoxal-phosphate-dependent aminotransferase family. Homodimer. It depends on pyridoxal 5'-phosphate as a cofactor. In terms of tissue distribution, expressed in cotyledons, sepals, pistils, flower buds, phloem companion cells and vascular tissues of petiole, leaf, filament and fruit.

The catalysed reaction is L-cystine + H2O = S-sulfanyl-L-cysteine + pyruvate + NH4(+). In terms of biological role, possesses cystine lyase activity in vitro. Does not possess tyrosine aminotransferase, alanine aminotransferase, aspartate aminotransferase and tryptophan aminotransferase activities. The sequence is that of Cystine lyase CORI3 from Arabidopsis thaliana (Mouse-ear cress).